A 132-amino-acid polypeptide reads, in one-letter code: MKVVCIIVLFVIVAVNESATSEANTSNAAKDTKKKNVTLQFPSYIQNPKQLALELLKICKNNKSSHNSLTSRSSYNYYAINDKYVDFKNCTFLCKHDKDINVTLNMPPNTPCGPNGQTCADKSQCVGHIPGC.

Residues 1–18 form the signal peptide; sequence MKVVCIIVLFVIVAVNES. N-linked (GlcNAc...) asparagine glycosylation is found at Asn24, Asn36, Asn62, Asn89, and Asn101. Residues 113–132 form a CD4-binding region; sequence GPNGQTCADKSQCVGHIPGC.

The protein belongs to the salp15 family. As to quaternary structure, interacts with host CD4. Interacts with host DC-SIGN (CD209). (Microbial infection) Interacts with Borrelia outer surface protein C (OspC). As to expression, expressed in salivary glands from feeding female ticks. Highly expressed 1 day after start of feeding, and weakly expressed at the initiation of feeding and 4 days after start of feeding.

Its subcellular location is the secreted. Functionally, salivary tick protein that downregulates host immune system by binding to both dendritic cells, and CD4(+) T cells. Specifically binds to the CD4 coreceptor on T cells. This interaction prevents the activation of the Src kinase, Lck, and its downstream substrate Zap-70, and results in deficient activation of PLCgamma1, the repression of calcium fluxes triggered by T-cell antigen receptor (TCR) ligation, and a subsequent reduction in interleukin-2 production. This salivary protein also binds to DC-SIGN (CD209) on dendritic cells (DC) and activates the Raf-1 kinase/MEK signaling pathway that results in down-regulating expression of pro-inflammatory cytokines. Furthermore, it inhibits T cell proliferation induced by DCs. It also inhibits in vitro keratinocyte inflammation induced by Borrelia burgdorferi or by the major outer surface protein (OspC) of Borrelia. In addition, it downregulates chemokines and monocyte chemoattractant protein 1, as well as several antimicrobial peptides such as defensins, cathelicidin, psoriasin, and RNase 7. Apart from its immunomodulatory activities, it is also associated with protection of Borrelia spirochetes from antibody-mediated killing through its binding to OspC. In vivo, tests on different immune disease animal models show promising therapeutic results, e.g., in inhibiting HIV infection, experimental autoimmune encephalomyelitis, transplantation rejection, and asthma. Its function is as follows. (Microbial infection) Protects Borrelia garinii from anti-Borrelia antibody-mediated cytotoxicity in vitro. May facilitate B.garinii transmission in mouse model. In terms of biological role, (Microbial infection) Protects Borrelia burgdorferi from anti-Borrelia antibody-mediated cytotoxicity in vitro. (Microbial infection) Protects Borrelia afzelii from anti-Borrelia antibody-mediated cytotoxicity in vitro. The chain is Salivary protein 15 Iper-2 from Ixodes persulcatus (Taiga tick).